A 529-amino-acid chain; its full sequence is Peptide chain release factor 3 (529 aa).

One can recognise a tr-type G domain in the interval 11-280 (AKRRTFAIIS…GLVEWAPAPM (270 aa)). Residues 20–27 (SHPDAGKT), 88–92 (DTPGH), and 142–145 (NKLD) each bind GTP.

Belongs to the TRAFAC class translation factor GTPase superfamily. Classic translation factor GTPase family. PrfC subfamily.

The protein localises to the cytoplasm. In terms of biological role, increases the formation of ribosomal termination complexes and stimulates activities of RF-1 and RF-2. It binds guanine nucleotides and has strong preference for UGA stop codons. It may interact directly with the ribosome. The stimulation of RF-1 and RF-2 is significantly reduced by GTP and GDP, but not by GMP. The polypeptide is Peptide chain release factor 3 (Yersinia pseudotuberculosis serotype O:1b (strain IP 31758)).